Here is a 637-residue protein sequence, read N- to C-terminus: Chaperone protein HtpG (637 aa).

An a; substrate-binding region spans residues 1-345 (MSQQETHGFQ…SNDLPLNVSR (345 aa)). The interval 346-562 (EILQDNHITK…EGEMSTQMIK (217 aa)) is b. The segment at 563 to 637 (LMQAAGQPVP…MNQMLLANLK (75 aa)) is c.

This sequence belongs to the heat shock protein 90 family. Homodimer.

The protein resides in the cytoplasm. Molecular chaperone. Has ATPase activity. In Shewanella oneidensis (strain ATCC 700550 / JCM 31522 / CIP 106686 / LMG 19005 / NCIMB 14063 / MR-1), this protein is Chaperone protein HtpG.